The sequence spans 726 residues: E3 SUMO-protein ligase SIZ2 (726 aa).

One can recognise an SAP domain in the interval Met43–Leu77. Positions Thr139 to Phe291 constitute a PINIT domain. An SP-RING-type zinc finger spans residues Asp323 to Gln408. Positions 354, 356, 377, and 380 each coordinate Zn(2+). Residues Pro507–Asp533 are disordered. The span at Ser510 to Asp533 shows a compositional bias: polar residues.

It belongs to the PIAS family. Interacts with CDC12. Post-translationally, autosumoylated upon ethanol stress.

It localises to the nucleus. The protein operates within protein modification; protein sumoylation. Its function is as follows. May act as an E3 ligase mediating SUMO/Smt3 attachment to septins. May be involved in chromosome maintenance. This is E3 SUMO-protein ligase SIZ2 (NFI1) from Saccharomyces cerevisiae (strain ATCC 204508 / S288c) (Baker's yeast).